A 442-amino-acid polypeptide reads, in one-letter code: MNKHYPHYLDLQPAMHAKGVVRLPGSKSISNRTLLLAALADGTTQIRDLLASDDTHVMLMALQKIGVKWEQIGESQDYVVHGVNGAFPVHQADLFMGNAGTAIRPLTAALAVTGGDYTLHGVSRMHERPIGDLVDALNAIGTHIEYTGEPGYPPLHIQRGRIHAQRMQVRGNVSSQFLTALLMAAPLMAREQDVTIDVVGELISKPYIEITLNLMRRFGVEVQRDGWQSFTIAAGQRYISPGIIHVEGDASSASYFLAAGAIAGGPVRVEGVGKNSIQGDVRFVESLQQMGATITMGDNWIEAKSNGALRAIDADFNHIPDAAMTIAVAALYADGTSTLRNIGSWRVKETDRISAMTIELRKLGASVEEGEDYLRITPPAVIQPAAIDTYDDHRMAMCFSLATLDGAIRKGSKIRINDPQCVAKTFPDYFTAFAKVTEDSLF.

3-phosphoshikimate is bound by residues lysine 27, serine 28, and arginine 32. A phosphoenolpyruvate-binding site is contributed by lysine 27. The phosphoenolpyruvate site is built by glycine 100 and arginine 128. Residues serine 174, serine 175, glutamine 176, serine 204, aspartate 321, and lysine 348 each coordinate 3-phosphoshikimate. A phosphoenolpyruvate-binding site is contributed by glutamine 176. Residue aspartate 321 is the Proton acceptor of the active site. Phosphoenolpyruvate is bound by residues arginine 352, arginine 394, and lysine 424.

The protein belongs to the EPSP synthase family. In terms of assembly, monomer.

The protein localises to the cytoplasm. It catalyses the reaction 3-phosphoshikimate + phosphoenolpyruvate = 5-O-(1-carboxyvinyl)-3-phosphoshikimate + phosphate. It functions in the pathway metabolic intermediate biosynthesis; chorismate biosynthesis; chorismate from D-erythrose 4-phosphate and phosphoenolpyruvate: step 6/7. Catalyzes the transfer of the enolpyruvyl moiety of phosphoenolpyruvate (PEP) to the 5-hydroxyl of shikimate-3-phosphate (S3P) to produce enolpyruvyl shikimate-3-phosphate and inorganic phosphate. The polypeptide is 3-phosphoshikimate 1-carboxyvinyltransferase (Herminiimonas arsenicoxydans).